The primary structure comprises 408 residues: Phosphoglycerate kinase (408 aa).

Residues 24–26 (DLN), R39, 62–65 (HLGR), R121, and R161 each bind substrate. ATP contacts are provided by residues K211, G307, E338, and 364-367 (GGDS).

It belongs to the phosphoglycerate kinase family. Monomer.

The protein resides in the cytoplasm. The enzyme catalyses (2R)-3-phosphoglycerate + ATP = (2R)-3-phospho-glyceroyl phosphate + ADP. The protein operates within carbohydrate degradation; glycolysis; pyruvate from D-glyceraldehyde 3-phosphate: step 2/5. The sequence is that of Phosphoglycerate kinase from Arthrobacter sp. (strain FB24).